A 647-amino-acid polypeptide reads, in one-letter code: DNA mismatch repair protein MutL (647 aa).

It belongs to the DNA mismatch repair MutL/HexB family.

This protein is involved in the repair of mismatches in DNA. It is required for dam-dependent methyl-directed DNA mismatch repair. May act as a 'molecular matchmaker', a protein that promotes the formation of a stable complex between two or more DNA-binding proteins in an ATP-dependent manner without itself being part of a final effector complex. The sequence is that of DNA mismatch repair protein MutL from Bacillus cereus (strain Q1).